The following is a 23-amino-acid chain: Testis ecdysiotropin peptide B (23 aa).

In terms of biological role, stimulates synthesis of ecdysteroid in the testes of larvae and pupae. In Lymantria dispar (Gypsy moth), this protein is Testis ecdysiotropin peptide B.